Here is a 431-residue protein sequence, read N- to C-terminus: Trigger factor (431 aa).

The 86-residue stretch at 158–243 (GDLVAVETWS…VAEVSEPVVP (86 aa)) folds into the PPIase FKBP-type domain.

It belongs to the FKBP-type PPIase family. Tig subfamily.

The protein localises to the cytoplasm. The enzyme catalyses [protein]-peptidylproline (omega=180) = [protein]-peptidylproline (omega=0). In terms of biological role, involved in protein export. Acts as a chaperone by maintaining the newly synthesized protein in an open conformation. Functions as a peptidyl-prolyl cis-trans isomerase. This chain is Trigger factor, found in Stenotrophomonas maltophilia (strain R551-3).